Consider the following 312-residue polypeptide: Malate dehydrogenase (312 aa).

NAD(+) is bound by residues 12–17 (GAGFTG) and Asp36. Arg87 and Arg93 together coordinate substrate. NAD(+) contacts are provided by residues Asn100 and 123–125 (LTN). Asn125 lines the substrate pocket. Ser149 is modified (phosphoserine). Arg156 lines the substrate pocket. Residue His180 is the Proton acceptor of the active site.

Belongs to the LDH/MDH superfamily. MDH type 3 family. As to quaternary structure, homotetramer.

It carries out the reaction (S)-malate + NAD(+) = oxaloacetate + NADH + H(+). Functionally, catalyzes the reversible oxidation of malate to oxaloacetate. The chain is Malate dehydrogenase from Bacillus israeli.